The sequence spans 443 residues: ATP-dependent protease ATPase subunit HslU (443 aa).

Residues I18, 60-65 (GVGKTE), D256, E321, and R393 contribute to the ATP site.

This sequence belongs to the ClpX chaperone family. HslU subfamily. As to quaternary structure, a double ring-shaped homohexamer of HslV is capped on each side by a ring-shaped HslU homohexamer. The assembly of the HslU/HslV complex is dependent on binding of ATP.

Its subcellular location is the cytoplasm. Its function is as follows. ATPase subunit of a proteasome-like degradation complex; this subunit has chaperone activity. The binding of ATP and its subsequent hydrolysis by HslU are essential for unfolding of protein substrates subsequently hydrolyzed by HslV. HslU recognizes the N-terminal part of its protein substrates and unfolds these before they are guided to HslV for hydrolysis. The chain is ATP-dependent protease ATPase subunit HslU from Tolumonas auensis (strain DSM 9187 / NBRC 110442 / TA 4).